The following is a 575-amino-acid chain: Carboxylesterase 5A (575 aa).

Positions 1–20 are cleaved as a signal peptide; it reads MSGNWVHPGQILIWAIWVLA. Cys-94 and Cys-121 are oxidised to a cystine. Ser-226 functions as the Acyl-ester intermediate in the catalytic mechanism. N-linked (GlcNAc...) asparagine glycosylation is present at Asn-281. Catalysis depends on Glu-345, which acts as the Charge relay system. An N-linked (GlcNAc...) asparagine glycan is attached at Asn-363. The active-site Charge relay system is His-454. N-linked (GlcNAc...) asparagine glycosylation is found at Asn-513 and Asn-524.

This sequence belongs to the type-B carboxylesterase/lipase family. Post-translationally, N-glycosylated.

The protein resides in the secreted. The enzyme catalyses a carboxylic ester + H2O = an alcohol + a carboxylate + H(+). Its function is as follows. Involved in the detoxification of xenobiotics and in the activation of ester and amide prodrugs. The protein is Carboxylesterase 5A (CES5A) of Homo sapiens (Human).